The chain runs to 201 residues: MQTSPLLTQLMEALRCLPGVGPKSAQRMAFTLLQRDRSGGMRLAQALTRAMSEIGHCADCRTFTEQDVCNICSNPRRQENGQICVVESPADIYAIEQTGQFPGRYFVLMGHLSPLDGIGPDDIGLDRLEQRLASEKISELILATNPTVEGEATANYIAELCAEAGVEASRIAHGVPVGGELEMVDGTTLSHSLAGRHKIIF.

The C4-type zinc finger occupies 57-72 (CADCRTFTEQDVCNIC). The Toprim domain maps to 81–176 (GQICVVESPA…EASRIAHGVP (96 aa)).

It belongs to the RecR family.

Functionally, may play a role in DNA repair. It seems to be involved in an RecBC-independent recombinational process of DNA repair. It may act with RecF and RecO. This chain is Recombination protein RecR, found in Salmonella choleraesuis (strain SC-B67).